The chain runs to 335 residues: UPF0065 protein BB4329 (335 aa).

Positions 1–39 (MNKNIPAFHRRCHGLVQGLARTLLLAPVLLALSVPAAQA) are cleaved as a signal peptide.

Belongs to the UPF0065 (bug) family.

It is found in the periplasm. This chain is UPF0065 protein BB4329, found in Bordetella bronchiseptica (strain ATCC BAA-588 / NCTC 13252 / RB50) (Alcaligenes bronchisepticus).